Here is a 790-residue protein sequence, read N- to C-terminus: Kinesin-like protein KIN-14D (790 aa).

Disordered stretches follow at residues 1-56 and 116-139; these read MPLR…DVGS and DKEN…LDAK. A globular region spans residues 1 to 66; it reads MPLRNQNRAP…TEECGKVEFT (66 aa). Basic and acidic residues predominate over residues 16 to 33; that stretch reads VKKEALSSIPFDKRRKET. A compositionally biased stretch (polar residues) spans 34 to 55; sequence QGTGRRQVLSTVNRQDANSDVG. Coiled coils occupy residues 117–316 and 347–426; these read KENL…HVVQ and SLEE…LELK. Positions 127–139 are enriched in basic and acidic residues; that stretch reads AEKRYSDKELDAK. The region spanning 428-769 is the Kinesin motor domain; that stretch reads NIRVFCRVRP…LRFAARVNAC (342 aa). 513-520 serves as a coordination point for ATP; it reads GQTGSGKT.

Belongs to the TRAFAC class myosin-kinesin ATPase superfamily. Kinesin family. KIN-14 subfamily. As to expression, slightly expressed in anther lobes with pollen mother cells at anther stage 5. Strongly expressed at anther stage 6 in the tapetum and meiotic cells. Also detected in the gynoecium and the ovule.

Its subcellular location is the cytoplasm. It localises to the cytoskeleton. It is found in the phragmoplast. Its function is as follows. Kinesin that supports microtubule movement in an ATP-dependent manner and that functions as a minus-end directed motor as well as a plus-end tracking protein. During mitosis, is involved in early spindle assembly. Participates in the capture of antiparallel interpolar microtubules and helps in generating force to coalign microtubules. This is Kinesin-like protein KIN-14D from Arabidopsis thaliana (Mouse-ear cress).